Here is a 285-residue protein sequence, read N- to C-terminus: HTH-type transcriptional regulator MurR (285 aa).

The region spanning 1–77 (MLYLTKISNA…MALIGEYSAS (77 aa)) is the HTH rpiR-type domain. Residues 37–56 (SRQMAKQLGISQSSIVKFAQ) constitute a DNA-binding region (H-T-H motif). One can recognise an SIS domain in the interval 128-268 (IIEVISKAPF…FVGLVQLNDV (141 aa)).

Homotetramer.

Its pathway is amino-sugar metabolism; N-acetylmuramate degradation [regulation]. Functionally, represses the expression of the murPQ operon involved in the uptake and degradation of N-acetylmuramic acid (MurNAc). Binds to two adjacent inverted repeats within the operator region. MurNAc 6-phosphate, the substrate of MurQ, is the specific inducer that weakens binding of MurR to the operator. The sequence is that of HTH-type transcriptional regulator MurR from Escherichia coli O139:H28 (strain E24377A / ETEC).